Here is a 446-residue protein sequence, read N- to C-terminus: Tubulin beta-5 chain (446 aa).

The MREI motif signature appears at 1-4 (MREI). GTP is bound by residues Gln-11, Glu-69, Ser-138, Gly-142, Thr-143, Gly-144, Asn-204, and Asn-226. Glu-69 is a Mg(2+) binding site. The residue at position 438 (Glu-438) is a 5-glutamyl polyglutamate.

Belongs to the tubulin family. In terms of assembly, dimer of alpha and beta chains. A typical microtubule is a hollow water-filled tube with an outer diameter of 25 nm and an inner diameter of 15 nM. Alpha-beta heterodimers associate head-to-tail to form protofilaments running lengthwise along the microtubule wall with the beta-tubulin subunit facing the microtubule plus end conferring a structural polarity. Microtubules usually have 13 protofilaments but different protofilament numbers can be found in some organisms and specialized cells. The cofactor is Mg(2+). Some glutamate residues at the C-terminus are polyglycylated, resulting in polyglycine chains on the gamma-carboxyl group. Glycylation is mainly limited to tubulin incorporated into axonemes (cilia and flagella) whereas glutamylation is prevalent in neuronal cells, centrioles, axonemes, and the mitotic spindle. Both modifications can coexist on the same protein on adjacent residues, and lowering polyglycylation levels increases polyglutamylation, and reciprocally. The precise function of polyglycylation is still unclear. In terms of processing, some glutamate residues at the C-terminus are polyglutamylated, resulting in polyglutamate chains on the gamma-carboxyl group. Polyglutamylation plays a key role in microtubule severing by spastin (SPAST). SPAST preferentially recognizes and acts on microtubules decorated with short polyglutamate tails: severing activity by SPAST increases as the number of glutamates per tubulin rises from one to eight, but decreases beyond this glutamylation threshold.

Its subcellular location is the cytoplasm. It localises to the cytoskeleton. Tubulin is the major constituent of microtubules, a cylinder consisting of laterally associated linear protofilaments composed of alpha- and beta-tubulin heterodimers. Microtubules grow by the addition of GTP-tubulin dimers to the microtubule end, where a stabilizing cap forms. Below the cap, tubulin dimers are in GDP-bound state, owing to GTPase activity of alpha-tubulin. In Gallus gallus (Chicken), this protein is Tubulin beta-5 chain.